The following is a 200-amino-acid chain: UPF0301 protein Veis_1517 (200 aa).

Belongs to the UPF0301 (AlgH) family.

This chain is UPF0301 protein Veis_1517, found in Verminephrobacter eiseniae (strain EF01-2).